The chain runs to 353 residues: Photosystem II protein D1 (353 aa).

Thr2 is subject to N-acetylthreonine. At Thr2 the chain carries Phosphothreonine. Helical transmembrane passes span 29 to 46, 118 to 133, and 142 to 156; these read YIGW…TATS, HFLL…EWEL, and WIAV…AATA. Position 118 (His118) interacts with chlorophyll a. Tyr126 contacts pheophytin a. The [CaMn4O5] cluster site is built by Asp170 and Glu189. Residues 197–218 form a helical membrane-spanning segment; sequence FHMLGVAGVFGGSLFSAMHGSL. His198 contacts chlorophyll a. A quinone-binding positions include His215 and 264 to 265; that span reads SF. Residue His215 coordinates Fe cation. His272 contributes to the Fe cation binding site. A helical transmembrane segment spans residues 274–288; sequence FLAAWPVVGIWFTAL. 4 residues coordinate [CaMn4O5] cluster: His332, Glu333, Asp342, and Ala344. The propeptide occupies 345 to 353; it reads AVEAPSING.

This sequence belongs to the reaction center PufL/M/PsbA/D family. PSII is composed of 1 copy each of membrane proteins PsbA, PsbB, PsbC, PsbD, PsbE, PsbF, PsbH, PsbI, PsbJ, PsbK, PsbL, PsbM, PsbT, PsbX, PsbY, PsbZ, Psb30/Ycf12, at least 3 peripheral proteins of the oxygen-evolving complex and a large number of cofactors. It forms dimeric complexes. The cofactor is The D1/D2 heterodimer binds P680, chlorophylls that are the primary electron donor of PSII, and subsequent electron acceptors. It shares a non-heme iron and each subunit binds pheophytin, quinone, additional chlorophylls, carotenoids and lipids. D1 provides most of the ligands for the Mn4-Ca-O5 cluster of the oxygen-evolving complex (OEC). There is also a Cl(-1) ion associated with D1 and D2, which is required for oxygen evolution. The PSII complex binds additional chlorophylls, carotenoids and specific lipids.. Tyr-161 forms a radical intermediate that is referred to as redox-active TyrZ, YZ or Y-Z. Post-translationally, C-terminally processed by CTPA; processing is essential to allow assembly of the oxygen-evolving complex and thus photosynthetic growth.

It is found in the plastid. It localises to the chloroplast thylakoid membrane. It catalyses the reaction 2 a plastoquinone + 4 hnu + 2 H2O = 2 a plastoquinol + O2. Functionally, this is one of the two reaction center proteins of photosystem II. Its function is as follows. Photosystem II (PSII) is a light-driven water:plastoquinone oxidoreductase that uses light energy to abstract electrons from H(2)O, generating O(2) and a proton gradient subsequently used for ATP formation. It consists of a core antenna complex that captures photons, and an electron transfer chain that converts photonic excitation into a charge separation. The D1/D2 (PsbA/PsbD) reaction center heterodimer binds P680, the primary electron donor of PSII as well as several subsequent electron acceptors. The polypeptide is Photosystem II protein D1 (Pisum sativum (Garden pea)).